The following is a 405-amino-acid chain: Argininosuccinate synthase (405 aa).

Residues 10 to 18 (AYSGGVDTS) and Ala38 each bind ATP. Tyr89 lines the L-citrulline pocket. Gly119 provides a ligand contact to ATP. L-aspartate is bound by residues Thr121, Asn125, and Asp126. Asn125 contacts L-citrulline. Positions 129, 177, 186, 262, and 274 each coordinate L-citrulline.

It belongs to the argininosuccinate synthase family. Type 1 subfamily. As to quaternary structure, homotetramer.

It is found in the cytoplasm. It catalyses the reaction L-citrulline + L-aspartate + ATP = 2-(N(omega)-L-arginino)succinate + AMP + diphosphate + H(+). It participates in amino-acid biosynthesis; L-arginine biosynthesis; L-arginine from L-ornithine and carbamoyl phosphate: step 2/3. This Synechococcus sp. (strain RCC307) protein is Argininosuccinate synthase.